Reading from the N-terminus, the 262-residue chain is ELL-associated factor 2 (262 aa).

The necessary for interaction with ELL stretch occupies residues 17–104 (LKLGESFEKQ…TGECRLEKLS (88 aa)). 3 positions are modified to phosphoserine: Ser146, Ser151, and Ser154. Residues 170 to 237 (MDQMSSCDSS…EADATCHRLQ (68 aa)) form a disordered region. Low complexity predominate over residues 174–192 (SSCDSSSDSKSSSSSSSED). Residues 177-262 (DSSSDSKSSS…LSESESDSED (86 aa)) form a necessary for transactivation activity region. Positions 193–202 (SSSDSEDDDQ) are enriched in acidic residues. A compositionally biased stretch (basic and acidic residues) spans 227–237 (SEADATCHRLQ). Residues 248–262 (RSDLQLSESESDSED) form a necessary for interaction with TCEA1 and transactivation activity region.

This sequence belongs to the EAF family. In terms of assembly, component of the super elongation complex (SEC), at least composed of EAF1, EAF2, CDK9, MLLT3/AF9, AFF (AFF1 or AFF4), the P-TEFb complex and ELL (ELL, ELL2 or ELL3). Interacts with ELL and ELL2. Isoform 1 and isoform 2 interact with TCEA1. In terms of tissue distribution, isoform 1 is expressed in ovary, uterus, mammary glands, brain, spleen, liver, lung, thymus, kidney, skeletal muscle, skin and testis. Isoform 2 is expressed in kidney.

The protein localises to the nucleus speckle. In terms of biological role, acts as a transcriptional transactivator of ELL and ELL2 elongation activities. Acts as a transcriptional transactivator of TCEA1 elongation activity. This chain is ELL-associated factor 2 (Eaf2), found in Mus musculus (Mouse).